The primary structure comprises 366 residues: Anhydro-N-acetylmuramic acid kinase (366 aa).

10–17 contributes to the ATP binding site; sequence GTSLDGVD.

The protein belongs to the anhydro-N-acetylmuramic acid kinase family.

The catalysed reaction is 1,6-anhydro-N-acetyl-beta-muramate + ATP + H2O = N-acetyl-D-muramate 6-phosphate + ADP + H(+). Its pathway is amino-sugar metabolism; 1,6-anhydro-N-acetylmuramate degradation. It participates in cell wall biogenesis; peptidoglycan recycling. In terms of biological role, catalyzes the specific phosphorylation of 1,6-anhydro-N-acetylmuramic acid (anhMurNAc) with the simultaneous cleavage of the 1,6-anhydro ring, generating MurNAc-6-P. Is required for the utilization of anhMurNAc either imported from the medium or derived from its own cell wall murein, and thus plays a role in cell wall recycling. This chain is Anhydro-N-acetylmuramic acid kinase, found in Nitrobacter winogradskyi (strain ATCC 25391 / DSM 10237 / CIP 104748 / NCIMB 11846 / Nb-255).